We begin with the raw amino-acid sequence, 476 residues long: 1-aminocyclopropane-1-carboxylate synthase 4 (476 aa).

N6-(pyridoxal phosphate)lysine is present on lysine 282.

This sequence belongs to the class-I pyridoxal-phosphate-dependent aminotransferase family. Homodimer. Pyridoxal 5'-phosphate serves as cofactor.

It catalyses the reaction S-adenosyl-L-methionine = 1-aminocyclopropane-1-carboxylate + S-methyl-5'-thioadenosine + H(+). The protein operates within alkene biosynthesis; ethylene biosynthesis via S-adenosyl-L-methionine; ethylene from S-adenosyl-L-methionine: step 1/2. Catalyzes the formation of 1-aminocyclopropane-1-carboxylate, a direct precursor of ethylene in higher plants. This Solanum lycopersicum (Tomato) protein is 1-aminocyclopropane-1-carboxylate synthase 4 (ACS4).